The sequence spans 418 residues: MKPEILKLIRSKLDLTQKQASEIIEVSDKTWQQWESGKTEMHPAYYSFLQEKLKDKINFEELSAQKTLQKKIFDKYNQNQITKNAEELAEITHIEERKDAYSSDFKFIDLFSGIGGIRQSFEVNGGKCVFSSEIDPFAKFTYYTNFGVVPFGDITKVEATTIPQHDILCAGFPCQPFSHIGKREGFEHPTQGTMFHEIVRIIETKKTPVLFLENVPGLINHDDGNTLKVIIETLEDMGYKVHHTVLDASHFGIPQKRKRFYLVAFLNQNIHFEFPKPPMISKDIGEVLESDVTGYSISEHLQKSYLFKKDDGKPSLIDKNTTGAVKTLVSTYHKIQRLTGTFVKDGETGIRLLTTNECKAIMGFPKDFVIPVSRTQMYRQMGNSVVVPVVTKIAEQISLALKTVNQQSPQENFELELV.

Residues 105–404 form the SAM-dependent MTase C5-type domain; that stretch reads FKFIDLFSGI…EQISLALKTV (300 aa). Cys174 is an active-site residue.

The protein belongs to the class I-like SAM-binding methyltransferase superfamily. C5-methyltransferase family.

The catalysed reaction is a 2'-deoxycytidine in DNA + S-adenosyl-L-methionine = a 5-methyl-2'-deoxycytidine in DNA + S-adenosyl-L-homocysteine + H(+). In terms of biological role, a methylase, recognizes the double-stranded sequence 5'-CCGG-3', methylates C-1 on both strands, and protects the DNA from cleavage by the MspI endonuclease. This is Type II methyltransferase M.MspI (mspIM) from Moraxella sp.